A 115-amino-acid polypeptide reads, in one-letter code: NADH-ubiquinone oxidoreductase chain 3 (115 aa).

A run of 3 helical transmembrane segments spans residues 4 to 24, 55 to 75, and 84 to 104; these read ILTLFINITLSLCLISIAFWL, FFLVGITFLLFDLEIALLLPL, and SYLTMTVSFMLVSALALGLAY.

It belongs to the complex I subunit 3 family. As to quaternary structure, core subunit of respiratory chain NADH dehydrogenase (Complex I) which is composed of 45 different subunits. Interacts with TMEM186. Interacts with TMEM242.

It is found in the mitochondrion inner membrane. The catalysed reaction is a ubiquinone + NADH + 5 H(+)(in) = a ubiquinol + NAD(+) + 4 H(+)(out). Its function is as follows. Core subunit of the mitochondrial membrane respiratory chain NADH dehydrogenase (Complex I) which catalyzes electron transfer from NADH through the respiratory chain, using ubiquinone as an electron acceptor. Essential for the catalytic activity of complex I. The polypeptide is NADH-ubiquinone oxidoreductase chain 3 (Necromys lactens (Rufous-bellied bolo mouse)).